Reading from the N-terminus, the 110-residue chain is Phosphoribosyl-ATP pyrophosphatase (110 aa).

The protein belongs to the PRA-PH family.

The protein resides in the cytoplasm. It carries out the reaction 1-(5-phospho-beta-D-ribosyl)-ATP + H2O = 1-(5-phospho-beta-D-ribosyl)-5'-AMP + diphosphate + H(+). It participates in amino-acid biosynthesis; L-histidine biosynthesis; L-histidine from 5-phospho-alpha-D-ribose 1-diphosphate: step 2/9. The chain is Phosphoribosyl-ATP pyrophosphatase from Clostridium novyi (strain NT).